The sequence spans 410 residues: Arginine biosynthesis bifunctional protein ArgJ (410 aa).

The substrate site is built by threonine 158, lysine 184, threonine 195, glutamate 282, asparagine 405, and serine 410. Threonine 195 functions as the Nucleophile in the catalytic mechanism.

The protein belongs to the ArgJ family. As to quaternary structure, heterotetramer of two alpha and two beta chains.

It localises to the cytoplasm. The enzyme catalyses N(2)-acetyl-L-ornithine + L-glutamate = N-acetyl-L-glutamate + L-ornithine. It catalyses the reaction L-glutamate + acetyl-CoA = N-acetyl-L-glutamate + CoA + H(+). Its pathway is amino-acid biosynthesis; L-arginine biosynthesis; L-ornithine and N-acetyl-L-glutamate from L-glutamate and N(2)-acetyl-L-ornithine (cyclic): step 1/1. The protein operates within amino-acid biosynthesis; L-arginine biosynthesis; N(2)-acetyl-L-ornithine from L-glutamate: step 1/4. Catalyzes two activities which are involved in the cyclic version of arginine biosynthesis: the synthesis of N-acetylglutamate from glutamate and acetyl-CoA as the acetyl donor, and of ornithine by transacetylation between N(2)-acetylornithine and glutamate. In Bartonella henselae (strain ATCC 49882 / DSM 28221 / CCUG 30454 / Houston 1) (Rochalimaea henselae), this protein is Arginine biosynthesis bifunctional protein ArgJ.